The primary structure comprises 319 residues: Phospho-N-acetylmuramoyl-pentapeptide-transferase (319 aa).

10 helical membrane-spanning segments follow: residues 5-25 (LIPF…FIGF), 51-71 (TMGG…VLIW), 79-99 (TWIL…DDGI), 116-136 (LGQI…HFAF), 149-169 (SFLF…AVNL), 172-192 (GLDG…AWIA), 197-217 (NWVI…FFIF), 224-244 (IFMG…VSIF), 252-272 (LLIG…VISF), and 299-319 (VDIV…IIWG).

It belongs to the glycosyltransferase 4 family. MraY subfamily. Mg(2+) serves as cofactor.

It is found in the cell membrane. The enzyme catalyses UDP-N-acetyl-alpha-D-muramoyl-L-alanyl-gamma-D-glutamyl-L-lysyl-D-alanyl-D-alanine + di-trans,octa-cis-undecaprenyl phosphate = Mur2Ac(oyl-L-Ala-gamma-D-Glu-L-Lys-D-Ala-D-Ala)-di-trans,octa-cis-undecaprenyl diphosphate + UMP. The protein operates within cell wall biogenesis; peptidoglycan biosynthesis. In terms of biological role, catalyzes the initial step of the lipid cycle reactions in the biosynthesis of the cell wall peptidoglycan: transfers peptidoglycan precursor phospho-MurNAc-pentapeptide from UDP-MurNAc-pentapeptide onto the lipid carrier undecaprenyl phosphate, yielding undecaprenyl-pyrophosphoryl-MurNAc-pentapeptide, known as lipid I. The sequence is that of Phospho-N-acetylmuramoyl-pentapeptide-transferase from Lactobacillus gasseri (strain ATCC 33323 / DSM 20243 / BCRC 14619 / CIP 102991 / JCM 1131 / KCTC 3163 / NCIMB 11718 / NCTC 13722 / AM63).